Reading from the N-terminus, the 379-residue chain is MIISASTDYRAAAERRLPPFLFHYIDGGAYAEHTLKRNVSDLSDIALRQRILRNMSDLSLETELFGETLAMPVALAPVGLTGMYARRGEVQAARAADSRGIPFTLSTVSVCPIEEVAPAIQRPMWFQLYVLRDRGFMRNALERAQAAGVTTLVFTVDMPVPGARYRDAHSGMSGPNASLRRIGQAITHPHWAWDVGLFGRPHDLGNISTYRGNPTGLEDYIGWLGSNFDPSISWKDLEWIREFWKGPMVIKGILDPDDARDAVRFGADGIVVSNHGGRQLDGVLSTARALPAIADAVQGDLKILADSGIRTGLDVVRMLALGADTVLLGRAFVYALAAQGEAGVANLLDLIAKEMRVAMTLTGARRIADIGRDSLVSLP.

The FMN hydroxy acid dehydrogenase domain maps to 1 to 379 (MIISASTDYR…IGRDSLVSLP (379 aa)). Substrate is bound at residue Tyr24. Ser106 and Gln127 together coordinate FMN. Tyr129 contacts substrate. Position 155 (Thr155) interacts with FMN. Substrate is bound at residue Arg164. Position 251 (Lys251) interacts with FMN. Catalysis depends on His275, which acts as the Proton acceptor. Arg278 provides a ligand contact to substrate. 306–330 (DSGIRTGLDVVRMLALGADTVLLGR) serves as a coordination point for FMN.

This sequence belongs to the FMN-dependent alpha-hydroxy acid dehydrogenase family. It depends on FMN as a cofactor.

The protein localises to the cell inner membrane. The catalysed reaction is (S)-lactate + A = pyruvate + AH2. Its function is as follows. Catalyzes the conversion of L-lactate to pyruvate. Is coupled to the respiratory chain. This chain is L-lactate dehydrogenase, found in Stenotrophomonas maltophilia (strain K279a).